The sequence spans 183 residues: Adenylate kinase (183 aa).

12–17 lines the ATP pocket; sequence GAGKGT. The interval 32–61 is NMP; it reads STGDLLRSEVAAGTALGQEAEAVMNRGELV. AMP-binding positions include T33, R38, 59-61, 86-89, and Q93; these read ELV and GFPR. The interval 127-133 is LID; sequence ARGRDDD. R128 is an ATP binding site. 2 residues coordinate AMP: R130 and R141. G169 lines the ATP pocket.

It belongs to the adenylate kinase family. As to quaternary structure, monomer.

It localises to the cytoplasm. The enzyme catalyses AMP + ATP = 2 ADP. It functions in the pathway purine metabolism; AMP biosynthesis via salvage pathway; AMP from ADP: step 1/1. Its function is as follows. Catalyzes the reversible transfer of the terminal phosphate group between ATP and AMP. Plays an important role in cellular energy homeostasis and in adenine nucleotide metabolism. The polypeptide is Adenylate kinase (Parasynechococcus marenigrum (strain WH8102)).